Here is a 449-residue protein sequence, read N- to C-terminus: Protein adenylyltransferase FICD (449 aa).

The chain crosses the membrane as a helical span at residues 15–35 (LLWGWGPILFGLLGSVFVLLL). TPR repeat units follow at residues 96-129 (AKAA…NPEF) and 130-163 (VEAL…SPCH). An Inhibitory (S/T)XXXE(G/N) motif motif is present at residues 220–225 (TVAIEG). ATP-binding positions include glutamate 224, 250 to 251 (EQ), 358 to 360 (GNG), and arginine 364. One can recognise a Fido domain in the interval 275–410 (ITVNDILEIH…VRPFIRFIAK (136 aa)).

The protein belongs to the fic family.

Its subcellular location is the membrane. It carries out the reaction L-tyrosyl-[protein] + ATP = O-(5'-adenylyl)-L-tyrosyl-[protein] + diphosphate. It catalyses the reaction L-threonyl-[protein] + ATP = 3-O-(5'-adenylyl)-L-threonyl-[protein] + diphosphate. Its activity is regulated as follows. Adenylyltransferase activity is inhibited by the inhibitory helix present at the N-terminus: Glu-224 binds ATP and competes with ATP-binding at Arg-364, thereby preventing adenylyltransferase activity. Activation dissociates ATP-binding from Glu-224, allowing ordered binding of the entire ATP moiety with the alpha-phosphate in an orientation that is productive for accepting an incoming target hydroxyl side chain. In terms of biological role, adenylyltransferase that mediates the addition of adenosine 5'-monophosphate (AMP) to specific residues of target proteins. This chain is Protein adenylyltransferase FICD (ficd), found in Danio rerio (Zebrafish).